The primary structure comprises 837 residues: Enterin neuropeptides (837 aa).

A signal peptide spans Met-1–Gly-25. A propeptide spanning residues Thr-26–Arg-47 is cleaved from the precursor. Val-57 bears the Valine amide mark. A propeptide spanning residues Ser-61–Glu-134 is cleaved from the precursor. A Valine amide modification is found at Val-146. A propeptide spanning residues Met-150 to Gly-178 is cleaved from the precursor. The residue at position 190 (Leu-190) is a Leucine amide. A propeptide spanning residues Met-194 to Arg-201 is cleaved from the precursor. Val-211 carries the post-translational modification Valine amide. A propeptide spanning residues Ser-215–Arg-234 is cleaved from the precursor. At Val-244 the chain carries Valine amide. Residues Gly-248 to Arg-266 constitute a propeptide that is removed on maturation. Val-276 bears the Valine amide mark. Positions Ser-280–Val-285 are excised as a propeptide. Position 297 is a valine amide (Val-297). Positions Asp-301 to Val-325 are excised as a propeptide. Residues Val-336, Val-348, Val-360, Val-372, Val-384, Val-396, Val-408, Val-420, Val-432, Val-444, Val-456, Val-468, Val-480, Val-492, Val-504, Val-516, Val-528, and Val-540 each carry the valine amide modification. The propeptide occupies Glu-544 to Glu-595. The interval Glu-567 to Phe-594 is disordered. Over residues Ser-584 to Asp-593 the composition is skewed to acidic residues. A Pyrrolidone carboxylic acid (Glu); in form ENl' modification is found at Glu-598. Val-606 is subject to Valine amide. The propeptide occupies Asp-610–Lys-627. Leucine amide is present on Leu-637. At Gln-641 the chain carries Pyrrolidone carboxylic acid. Val-649 bears the Valine amide mark. Gln-653 is modified (pyrrolidone carboxylic acid). 2 positions are modified to valine amide: Val-661 and Val-673. Gln-677 carries the pyrrolidone carboxylic acid modification. A valine amide mark is found at Val-685 and Val-697. The residue at position 701 (Gln-701) is a Pyrrolidone carboxylic acid. Val-709 is modified (valine amide). Pyrrolidone carboxylic acid is present on Gln-713. At Val-721 the chain carries Valine amide. Gln-725 carries the pyrrolidone carboxylic acid modification. The residue at position 733 (Val-733) is a Valine amide. The propeptide occupies Gly-734 to Thr-837. The segment at Gly-772–Thr-837 is disordered. The span at Asn-778–Glu-791 shows a compositional bias: acidic residues.

As to expression, high expression in gut and CNS.

It localises to the secreted. In terms of biological role, reduce interneurons B4/5 activity. May play a regulatory role in nonfeeding behaviors. The chain is Enterin neuropeptides (ENPP) from Aplysia californica (California sea hare).